A 552-amino-acid polypeptide reads, in one-letter code: Membrane protein insertase YidC (552 aa).

The chain crosses the membrane as a helical span at residues 6 to 26 (NLLLAAIAAVILMLFIRWNHF). Composition is skewed to polar residues over residues 32-41 (QHQAGNTPAG) and 60-70 (PTASDTPQATA). The segment at 32 to 70 (QHQAGNTPAGSSIAAIAPDSNGDIPSAVPTASDTPQATA) is disordered. Transmembrane regions (helical) follow at residues 365 to 387 (WGLAIIGLTLSVKLLFFPLSAAS), 431 to 451 (FGGCLPLLIQMPVFIALYWVL), 472 to 492 (MDPYFVLPIIYGATMWIMQKL), and 508 to 528 (LPFVFTFMFLWFPAGLVLYWV).

This sequence belongs to the OXA1/ALB3/YidC family. Type 1 subfamily. In terms of assembly, interacts with the Sec translocase complex via SecD. Specifically interacts with transmembrane segments of nascent integral membrane proteins during membrane integration.

The protein resides in the cell inner membrane. Its function is as follows. Required for the insertion and/or proper folding and/or complex formation of integral membrane proteins into the membrane. Involved in integration of membrane proteins that insert both dependently and independently of the Sec translocase complex, as well as at least some lipoproteins. Aids folding of multispanning membrane proteins. The sequence is that of Membrane protein insertase YidC from Cellvibrio japonicus (strain Ueda107) (Pseudomonas fluorescens subsp. cellulosa).